We begin with the raw amino-acid sequence, 420 residues long: Serine hydroxymethyltransferase (420 aa).

Residues Leu-121 and 125 to 127 (GHL) contribute to the (6S)-5,6,7,8-tetrahydrofolate site. Lys-229 bears the N6-(pyridoxal phosphate)lysine mark.

This sequence belongs to the SHMT family. Homodimer. Pyridoxal 5'-phosphate serves as cofactor.

It localises to the cytoplasm. The enzyme catalyses (6R)-5,10-methylene-5,6,7,8-tetrahydrofolate + glycine + H2O = (6S)-5,6,7,8-tetrahydrofolate + L-serine. It participates in one-carbon metabolism; tetrahydrofolate interconversion. Its pathway is amino-acid biosynthesis; glycine biosynthesis; glycine from L-serine: step 1/1. Catalyzes the reversible interconversion of serine and glycine with tetrahydrofolate (THF) serving as the one-carbon carrier. This reaction serves as the major source of one-carbon groups required for the biosynthesis of purines, thymidylate, methionine, and other important biomolecules. Also exhibits THF-independent aldolase activity toward beta-hydroxyamino acids, producing glycine and aldehydes, via a retro-aldol mechanism. The chain is Serine hydroxymethyltransferase from Wigglesworthia glossinidia brevipalpis.